The chain runs to 300 residues: Formylmethanofuran--tetrahydromethanopterin formyltransferase-like protein (300 aa).

Belongs to the FTR family.

The sequence is that of Formylmethanofuran--tetrahydromethanopterin formyltransferase-like protein from Methanopyrus kandleri (strain AV19 / DSM 6324 / JCM 9639 / NBRC 100938).